Here is a 110-residue protein sequence, read N- to C-terminus: Keratin, type II cytoskeletal 8 (110 aa).

The head stretch occupies residues Met-1 to Arg-12. Residues Met-1–Lys-110 enclose the IF rod domain. A phosphoserine mark is found at Ser-2, Ser-4, Ser-10, and Ser-11. The residue at position 12 (Arg-12) is an Omega-N-methylarginine. Positions Phe-13 to Leu-25 are coil 1A. The tract at residues Gln-26–Tyr-39 is linker 1. Residue Lys-29 forms a Glycyl lysine isopeptide (Lys-Gly) (interchain with G-Cter in SUMO2) linkage. A coil 1B region spans residues Ile-40–Arg-79. Residue Lys-53 is modified to N6-acetyllysine. Phosphoserine occurs at positions 80 and 85. Residues Ser-80 to Ile-86 form a linker 12 region. A coil 2 region spans residues Ile-87–Lys-110. Residues Ala-88 to Leu-99 are necessary for interaction with PNN. A Glycyl lysine isopeptide (Lys-Gly) (interchain with G-Cter in SUMO2) cross-link involves residue Lys-110.

The protein belongs to the intermediate filament family. As to quaternary structure, heterotetramer of two type I and two type II keratins. Forms a heterodimer with KRT18. Associates with KRT20. Interacts with PNN. When associated with KRT19, interacts with DMD. Interacts with TCHP. Interacts with APEX1. Interacts with GPER1. Interacts with EPPK1. Interacts with PKP1 and PKP2. In terms of processing, O-glycosylated. O-GlcNAcylation at multiple sites increases solubility, and decreases stability by inducing proteasomal degradation. O-glycosylated (O-GlcNAcylated), in a cell cycle-dependent manner.

Its subcellular location is the cytoplasm. The protein localises to the nucleus. It localises to the nucleoplasm. The protein resides in the nucleus matrix. Functionally, together with KRT19, helps to link the contractile apparatus to dystrophin at the costameres of striated muscle. The polypeptide is Keratin, type II cytoskeletal 8 (Mesocricetus auratus (Golden hamster)).